Reading from the N-terminus, the 307-residue chain is Elongation factor Ts (307 aa).

The interval 79–82 (TDFV) is involved in Mg(2+) ion dislocation from EF-Tu.

Belongs to the EF-Ts family.

It localises to the cytoplasm. Its function is as follows. Associates with the EF-Tu.GDP complex and induces the exchange of GDP to GTP. It remains bound to the aminoacyl-tRNA.EF-Tu.GTP complex up to the GTP hydrolysis stage on the ribosome. In Sinorhizobium medicae (strain WSM419) (Ensifer medicae), this protein is Elongation factor Ts.